Consider the following 179-residue polypeptide: NAD(P)H-quinone oxidoreductase subunit I, chloroplastic (179 aa).

2 4Fe-4S ferredoxin-type domains span residues 55 to 84 (GRIHFEFDKCIACEVCVRVCPIDLPVVDWR) and 95 to 124 (LNYSIDFGICIFCGNCVEYCPTNCLSMTEE). Residues cysteine 64, cysteine 67, cysteine 70, cysteine 74, cysteine 104, cysteine 107, cysteine 110, and cysteine 114 each coordinate [4Fe-4S] cluster.

Belongs to the complex I 23 kDa subunit family. NDH is composed of at least 16 different subunits, 5 of which are encoded in the nucleus. [4Fe-4S] cluster is required as a cofactor.

The protein resides in the plastid. It is found in the chloroplast thylakoid membrane. It catalyses the reaction a plastoquinone + NADH + (n+1) H(+)(in) = a plastoquinol + NAD(+) + n H(+)(out). It carries out the reaction a plastoquinone + NADPH + (n+1) H(+)(in) = a plastoquinol + NADP(+) + n H(+)(out). In terms of biological role, NDH shuttles electrons from NAD(P)H:plastoquinone, via FMN and iron-sulfur (Fe-S) centers, to quinones in the photosynthetic chain and possibly in a chloroplast respiratory chain. The immediate electron acceptor for the enzyme in this species is believed to be plastoquinone. Couples the redox reaction to proton translocation, and thus conserves the redox energy in a proton gradient. The sequence is that of NAD(P)H-quinone oxidoreductase subunit I, chloroplastic from Nuphar advena (Common spatterdock).